Consider the following 360-residue polypeptide: Isocitrate dehydrogenase [NAD] regulatory subunit B, mitochondrial (360 aa).

A mitochondrion-targeting transit peptide spans Met-1 to Tyr-113. Positions 101, 103, 107, and 140 each coordinate substrate. Residue Asp-227 participates in Mg(2+) binding. Residues His-284–Ile-290 and Asn-297 contribute to the NADP(+) site.

The protein belongs to the isocitrate and isopropylmalate dehydrogenases family. As to quaternary structure, heterooligomer of catalytic and regulatory subunits. Mg(2+) serves as cofactor. Mn(2+) is required as a cofactor.

Its subcellular location is the mitochondrion. It catalyses the reaction D-threo-isocitrate + NAD(+) = 2-oxoglutarate + CO2 + NADH. In terms of biological role, performs an essential role in the oxidative function of the citric acid cycle. In Dictyostelium discoideum (Social amoeba), this protein is Isocitrate dehydrogenase [NAD] regulatory subunit B, mitochondrial (idhB).